A 298-amino-acid polypeptide reads, in one-letter code: Acetyl-coenzyme A carboxylase carboxyl transferase subunit beta (298 aa).

The disordered stretch occupies residues 1–21 (MNQEVKSGKVLSPSTPWTQRP). One can recognise a CoA carboxyltransferase N-terminal domain in the interval 41–298 (PTIECPECHA…RLVSKLMNLP (258 aa)). Zn(2+)-binding residues include Cys45, Cys48, Cys64, and Cys67. The C4-type zinc finger occupies 45 to 67 (CPECHALVTRTAISFNAYVCPQC).

It belongs to the AccD/PCCB family. Acetyl-CoA carboxylase is a heterohexamer composed of biotin carboxyl carrier protein (AccB), biotin carboxylase (AccC) and two subunits each of ACCase subunit alpha (AccA) and ACCase subunit beta (AccD). Zn(2+) is required as a cofactor.

The protein resides in the cytoplasm. The catalysed reaction is N(6)-carboxybiotinyl-L-lysyl-[protein] + acetyl-CoA = N(6)-biotinyl-L-lysyl-[protein] + malonyl-CoA. The protein operates within lipid metabolism; malonyl-CoA biosynthesis; malonyl-CoA from acetyl-CoA: step 1/1. Functionally, component of the acetyl coenzyme A carboxylase (ACC) complex. Biotin carboxylase (BC) catalyzes the carboxylation of biotin on its carrier protein (BCCP) and then the CO(2) group is transferred by the transcarboxylase to acetyl-CoA to form malonyl-CoA. This chain is Acetyl-coenzyme A carboxylase carboxyl transferase subunit beta, found in Acinetobacter baumannii (strain AYE).